We begin with the raw amino-acid sequence, 289 residues long: ATP synthase gamma chain (289 aa).

Belongs to the ATPase gamma chain family. In terms of assembly, F-type ATPases have 2 components, CF(1) - the catalytic core - and CF(0) - the membrane proton channel. CF(1) has five subunits: alpha(3), beta(3), gamma(1), delta(1), epsilon(1). CF(0) has three main subunits: a, b and c.

The protein resides in the cell inner membrane. Produces ATP from ADP in the presence of a proton gradient across the membrane. The gamma chain is believed to be important in regulating ATPase activity and the flow of protons through the CF(0) complex. The chain is ATP synthase gamma chain from Azorhizobium caulinodans (strain ATCC 43989 / DSM 5975 / JCM 20966 / LMG 6465 / NBRC 14845 / NCIMB 13405 / ORS 571).